Reading from the N-terminus, the 425-residue chain is Glutamyl-tRNA reductase (425 aa).

Substrate is bound by residues 47–50, serine 107, 112–114, and glutamine 118; these read TCNR and EDQ. Cysteine 48 acts as the Nucleophile in catalysis. 187–192 contributes to the NADP(+) binding site; it reads GAGHIA.

Belongs to the glutamyl-tRNA reductase family. In terms of assembly, homodimer.

The catalysed reaction is (S)-4-amino-5-oxopentanoate + tRNA(Glu) + NADP(+) = L-glutamyl-tRNA(Glu) + NADPH + H(+). It functions in the pathway porphyrin-containing compound metabolism; protoporphyrin-IX biosynthesis; 5-aminolevulinate from L-glutamyl-tRNA(Glu): step 1/2. The protein operates within porphyrin-containing compound metabolism; chlorophyll biosynthesis. In terms of biological role, catalyzes the NADPH-dependent reduction of glutamyl-tRNA(Glu) to glutamate 1-semialdehyde (GSA). This is Glutamyl-tRNA reductase from Roseiflexus sp. (strain RS-1).